Consider the following 158-residue polypeptide: Non-secretory ribonuclease (158 aa).

A signal peptide spans 1-27; sequence MVPKLFTSQICLLLLLGLSSLEVSLHA. Residue W34 is glycosylated (C-linked (Man) tryptophan). H42 (proton acceptor) is an active-site residue. Position 60 is a 3'-nitrotyrosine (Y60). 65-69 is a substrate binding site; that stretch reads KNRNT. N-linked (GlcNAc...) asparagine glycosylation is found at N86, N92, and N111. Residue H153 is the Proton donor of the active site.

The protein belongs to the pancreatic ribonuclease family. Interacts with and forms a tight 1:1 complex with RNH1. Dimerization of two such complexes may occur.

It localises to the lysosome. The protein localises to the cytoplasmic granule. It catalyses the reaction an [RNA] containing cytidine + H2O = an [RNA]-3'-cytidine-3'-phosphate + a 5'-hydroxy-ribonucleotide-3'-[RNA].. The catalysed reaction is an [RNA] containing uridine + H2O = an [RNA]-3'-uridine-3'-phosphate + a 5'-hydroxy-ribonucleotide-3'-[RNA].. This is a non-secretory ribonuclease. It is a pyrimidine specific nuclease with a slight preference for U. Cytotoxin and helminthotoxin. Possesses a wide variety of biological activities. The chain is Non-secretory ribonuclease (RNASE2) from Saguinus labiatus (Red-chested mustached tamarin).